The sequence spans 479 residues: NADH-quinone oxidoreductase subunit N 2 (479 aa).

The next 14 helical transmembrane spans lie at 4–24 (FVSF…FVVT), 43–63 (GVLV…SGAY), 67–87 (AFSQ…GILS), 99–119 (PEYF…VSSI), 121–141 (VITL…MVAM), 159–179 (IMFG…LYGL), 201–221 (AVTG…VFPF), 239–259 (LIAS…VSLA), 267–287 (ATLL…IALV), 294–314 (LLGF…VAMD), 318–338 (FASA…CFVV), 364–384 (LAVT…FVGF), 401–421 (ALVV…LQIV), and 444–464 (ALCV…AFTI).

Belongs to the complex I subunit 2 family. As to quaternary structure, NDH-1 is composed of 14 different subunits. Subunits NuoA, H, J, K, L, M, N constitute the membrane sector of the complex.

The protein localises to the cell inner membrane. It catalyses the reaction a quinone + NADH + 5 H(+)(in) = a quinol + NAD(+) + 4 H(+)(out). In terms of biological role, NDH-1 shuttles electrons from NADH, via FMN and iron-sulfur (Fe-S) centers, to quinones in the respiratory chain. The immediate electron acceptor for the enzyme in this species is believed to be ubiquinone. Couples the redox reaction to proton translocation (for every two electrons transferred, four hydrogen ions are translocated across the cytoplasmic membrane), and thus conserves the redox energy in a proton gradient. The polypeptide is NADH-quinone oxidoreductase subunit N 2 (Opitutus terrae (strain DSM 11246 / JCM 15787 / PB90-1)).